The primary structure comprises 1047 residues: Atrial natriuretic peptide receptor 2 (1047 aa).

Positions 1–22 are cleaved as a signal peptide; the sequence is MALPSLLLLVAALAGGVRPPGA. Over 23–458 the chain is Extracellular; the sequence is RNLTLAVVLP…DKTPLSTLAI (436 aa). Asn24 and Asn35 each carry an N-linked (GlcNAc...) asparagine glycan. The cysteines at positions 75 and 101 are disulfide-linked. N-linked (GlcNAc...) asparagine glycosylation is found at Asn161, Asn195, Asn244, Asn277, and Asn349. Residues 459–478 form a helical membrane-spanning segment; that stretch reads VALGTGITFIMFGVSSFLIF. Topologically, residues 479–1047 are cytoplasmic; that stretch reads RKLMLEKELA…GERKGPPGLL (569 aa). Ser513 carries the post-translational modification Phosphoserine. Residues 513–786 enclose the Protein kinase domain; sequence SRLTLSLRGS…PDFGQIKGFI (274 aa). Thr516 carries the phosphothreonine modification. 4 positions are modified to phosphoserine: Ser518, Ser522, Ser523, and Ser526. Thr529 bears the Phosphothreonine mark. Positions 861–991 constitute a Guanylate cyclase domain; it reads TIYFSDIVGF…DTVNTASRME (131 aa).

This sequence belongs to the adenylyl cyclase class-4/guanylyl cyclase family. Post-translationally, phosphorylated. Phosphorylation of the protein kinase-like domain is required for full activation by CNP. In terms of processing, glycosylated.

It is found in the cell membrane. It carries out the reaction GTP = 3',5'-cyclic GMP + diphosphate. In terms of biological role, receptor for the C-type natriuretic peptide NPPC/CNP hormone. Has guanylate cyclase activity upon binding of its ligand. May play a role in the regulation of skeletal growth. This chain is Atrial natriuretic peptide receptor 2 (NPR2), found in Homo sapiens (Human).